The sequence spans 232 residues: MRLKIGIIGAMAQEVEILRNLMVEAKVIKMAGCKIYDGKINNTKVALLQSGIGKVSAAIGTTLLLELTKPDMVINTGSAGGLDANLNVGDIVISTEVRHHDADVTAFGYEKGQLPANPAAFLPNEQLVSVALKETQTAGFNAVSGLICSGDVFVNGAEKIAQIRQDFPNVAAVEMEAAAIAQVCHAFNVPFVVVRAISDVADKESHLSFDEFLPLAAKNSSEIVVAMLNNFA.

E14 (proton acceptor) is an active-site residue. Residues G80, V154, and 175 to 176 (ME) each bind substrate. The active-site Proton donor is the D199.

Belongs to the PNP/UDP phosphorylase family. MtnN subfamily.

It catalyses the reaction S-adenosyl-L-homocysteine + H2O = S-(5-deoxy-D-ribos-5-yl)-L-homocysteine + adenine. The enzyme catalyses S-methyl-5'-thioadenosine + H2O = 5-(methylsulfanyl)-D-ribose + adenine. The catalysed reaction is 5'-deoxyadenosine + H2O = 5-deoxy-D-ribose + adenine. The protein operates within amino-acid biosynthesis; L-methionine biosynthesis via salvage pathway; S-methyl-5-thio-alpha-D-ribose 1-phosphate from S-methyl-5'-thioadenosine (hydrolase route): step 1/2. Its function is as follows. Catalyzes the irreversible cleavage of the glycosidic bond in both 5'-methylthioadenosine (MTA) and S-adenosylhomocysteine (SAH/AdoHcy) to adenine and the corresponding thioribose, 5'-methylthioribose and S-ribosylhomocysteine, respectively. Also cleaves 5'-deoxyadenosine, a toxic by-product of radical S-adenosylmethionine (SAM) enzymes, into 5-deoxyribose and adenine. The polypeptide is 5'-methylthioadenosine/S-adenosylhomocysteine nucleosidase (Actinobacillus pleuropneumoniae serotype 3 (strain JL03)).